The primary structure comprises 919 residues: Probable glucan 1,3-alpha-glucosidase (919 aa).

The first 28 residues, Met1–Ala28, serve as a signal peptide directing secretion. The Nucleophile role is filled by Asp510. The active site involves Glu513. Residue Asp586 is the Proton donor of the active site. N-linked (GlcNAc...) asparagine glycosylation is present at Asn802.

Belongs to the glycosyl hydrolase 31 family. As to quaternary structure, heterodimer of a catalytic alpha subunit and a beta subunit.

It is found in the endoplasmic reticulum. It catalyses the reaction N(4)-(alpha-D-Glc-(1-&gt;3)-alpha-D-Man-(1-&gt;2)-alpha-D-Man-(1-&gt;2)-alpha-D-Man-(1-&gt;3)-[alpha-D-Man-(1-&gt;2)-alpha-D-Man-(1-&gt;3)-[alpha-D-Man-(1-&gt;2)-alpha-D-Man-(1-&gt;6)]-alpha-D-Man-(1-&gt;6)]-beta-D-Man-(1-&gt;4)-beta-D-GlcNAc-(1-&gt;4)-beta-D-GlcNAc)-L-asparaginyl-[protein] + H2O = N(4)-(alpha-D-Man-(1-&gt;2)-alpha-D-Man-(1-&gt;2)-alpha-D-Man-(1-&gt;3)-[alpha-D-Man-(1-&gt;2)-alpha-D-Man-(1-&gt;3)-[alpha-D-Man-(1-&gt;2)-alpha-D-Man-(1-&gt;6)]-alpha-D-Man-(1-&gt;6)]-beta-D-Man-(1-&gt;4)-beta-D-GlcNAc-(1-&gt;4)-beta-D-GlcNAc)-L-asparaginyl-[protein] (N-glucan mannose isomer 9A1,2,3B1,2,3) + beta-D-glucose. The catalysed reaction is N(4)-(alpha-D-Glc-(1-&gt;3)-alpha-D-Glc-(1-&gt;3)-alpha-D-Man-(1-&gt;2)-alpha-D-Man-(1-&gt;2)-alpha-D-Man-(1-&gt;3)-[alpha-D-Man-(1-&gt;2)-alpha-D-Man-(1-&gt;3)-[alpha-D-Man-(1-&gt;2)-alpha-D-Man-(1-&gt;6)]-alpha-D-Man-(1-&gt;6)]-beta-D-Man-(1-&gt;4)-beta-D-GlcNAc-(1-&gt;4)-beta-D-GlcNAc)-L-asparaginyl-[protein] + H2O = N(4)-(alpha-D-Glc-(1-&gt;3)-alpha-D-Man-(1-&gt;2)-alpha-D-Man-(1-&gt;2)-alpha-D-Man-(1-&gt;3)-[alpha-D-Man-(1-&gt;2)-alpha-D-Man-(1-&gt;3)-[alpha-D-Man-(1-&gt;2)-alpha-D-Man-(1-&gt;6)]-alpha-D-Man-(1-&gt;6)]-beta-D-Man-(1-&gt;4)-beta-D-GlcNAc-(1-&gt;4)-beta-D-GlcNAc)-L-asparaginyl-[protein] + beta-D-glucose. The protein operates within glycan metabolism; N-glycan metabolism. Functionally, cleaves sequentially the 2 innermost alpha-1,3-linked glucose residues from the Glc(2)Man(9)GlcNAc(2) oligosaccharide precursor of immature glycoproteins. May be required for defense response elicited by pathogen-associated molecular patterns (PAMPs). The sequence is that of Probable glucan 1,3-alpha-glucosidase from Oryza sativa subsp. japonica (Rice).